A 132-amino-acid chain; its full sequence is Small ribosomal subunit protein uS8 (132 aa).

The protein belongs to the universal ribosomal protein uS8 family. In terms of assembly, part of the 30S ribosomal subunit. Contacts proteins S5 and S12.

In terms of biological role, one of the primary rRNA binding proteins, it binds directly to 16S rRNA central domain where it helps coordinate assembly of the platform of the 30S subunit. The protein is Small ribosomal subunit protein uS8 of Bartonella bacilliformis (strain ATCC 35685 / KC583 / Herrer 020/F12,63).